The sequence spans 331 residues: tRNA-cytidine(32) 2-sulfurtransferase (331 aa).

Residues 1-31 (MNAPHMNDTTADAATLDATAAPAGRPALTRR) are disordered. Over residues 8–23 (DTTADAATLDATAAPA) the composition is skewed to low complexity. The PP-loop motif motif lies at 71–76 (SGGKDS). [4Fe-4S] cluster is bound by residues C146, C149, and C237.

It belongs to the TtcA family. As to quaternary structure, homodimer. Mg(2+) serves as cofactor. It depends on [4Fe-4S] cluster as a cofactor.

The protein localises to the cytoplasm. The catalysed reaction is cytidine(32) in tRNA + S-sulfanyl-L-cysteinyl-[cysteine desulfurase] + AH2 + ATP = 2-thiocytidine(32) in tRNA + L-cysteinyl-[cysteine desulfurase] + A + AMP + diphosphate + H(+). Its pathway is tRNA modification. Its function is as follows. Catalyzes the ATP-dependent 2-thiolation of cytidine in position 32 of tRNA, to form 2-thiocytidine (s(2)C32). The sulfur atoms are provided by the cysteine/cysteine desulfurase (IscS) system. The chain is tRNA-cytidine(32) 2-sulfurtransferase from Burkholderia lata (strain ATCC 17760 / DSM 23089 / LMG 22485 / NCIMB 9086 / R18194 / 383).